Reading from the N-terminus, the 1010-residue chain is Lysosomal alpha-mannosidase (1010 aa).

Residues 1 to 22 form the signal peptide; the sequence is MVIKKLFILIFCLFLIINEING. Residues 23–40 constitute a propeptide, pro I; sequence KKTKINDIKKSKPKLSST. Zn(2+)-binding residues include H51 and D53. N-linked (GlcNAc...) asparagine glycosylation occurs at N68. Zn(2+) contacts are provided by D173 and H420. D173 functions as the Nucleophile in the catalytic mechanism. N-linked (GlcNAc...) asparagine glycosylation is found at N480, N520, N528, N539, N623, N760, N784, N828, N954, and N963. Positions 508 to 595 are cleaved as a propeptide — pro II; the sequence is RNEPVRIPIP…GGGKINEKVS (88 aa).

The protein belongs to the glycosyl hydrolase 38 family. In terms of assembly, tetramer of equimolar amounts of 60 and 58 kDa subunits. Zn(2+) is required as a cofactor. First cleaved into the mature 58 kDa subunit and an intermediate 82 kDa subunit. The latter is then cleaved to its mature 60 kDa subunit form. These events occur in multiple intracellular compartments. The 60 kDa subunit may form one or more intramolecular disulfide bonds.

It localises to the lysosome. The enzyme catalyses Hydrolysis of terminal, non-reducing alpha-D-mannose residues in alpha-D-mannosides.. The polypeptide is Lysosomal alpha-mannosidase (manA) (Dictyostelium discoideum (Social amoeba)).